The chain runs to 597 residues: NADPH-dependent diflavin oxidoreductase 1 (597 aa).

Positions 6 to 150 constitute a Flavodoxin-like domain; the sequence is LLVLFGSQTG…AVDPWLRDLW (145 aa). Residues 12 to 17, 59 to 62, 97 to 106, and Asp-132 contribute to the FMN site; these read SQTGTA, ATTG, and LGDSSYAKFN. The segment at 188-207 is disordered; sequence GSEGQRVAHPGSQEPPSESK. Residues 206–447 form the FAD-binding FR-type domain; that stretch reads SKPFLAPMIS…VRPGSLAFPE (242 aa). FAD is bound by residues Arg-350, 382–385, and 416–419; these read RAFS and GLCS. Residues Thr-460, 515–516, 521–525, and Asp-558 contribute to the NADP(+) site; these read SR and KVYVQ. Residue Trp-596 coordinates FAD.

It belongs to the NADPH-dependent diflavin oxidoreductase NDOR1 family. In the N-terminal section; belongs to the flavodoxin family. This sequence in the C-terminal section; belongs to the flavoprotein pyridine nucleotide cytochrome reductase family. As to quaternary structure, interacts with CIAPIN1; as part of the cytosolic iron-sulfur (Fe-S) protein assembly (CIA) machinery. Interacts with DCPS. FAD is required as a cofactor. FMN serves as cofactor. In terms of tissue distribution, low expression in brain, heart, kidney, pancreas, prostate and skeletal muscle. Highest levels in the placenta. Expressed in cancer cell lines including promyelocytic leukemia, HeLaS3, chronic myelagenous leukemia, lymphoblastic leukemia, Burkitt's lymphoma, colorectal adenocarcinoma, lung carcinoma, and melanoma G-361.

Its subcellular location is the cytoplasm. It localises to the perinuclear region. The catalysed reaction is 2 oxidized [2Fe-2S]-[protein] + NADPH = 2 reduced [2Fe-2S]-[protein] + NADP(+) + H(+). In terms of biological role, NADPH-dependent reductase which is a central component of the cytosolic iron-sulfur (Fe-S) protein assembly (CIA) machinery. Transfers electrons from NADPH via its FAD and FMN prosthetic groups to the [2Fe-2S] cluster of CIAPIN1, another key component of the CIA machinery. In turn, this reduced cluster provides electrons for assembly of cytosolic iron-sulfur cluster proteins. It can also reduce the [2Fe-2S] cluster of CISD1 and activate this protein implicated in Fe/S cluster repair. In vitro can fully activate methionine synthase/MTR in the presence of soluble cytochrome b5/CYB5A. The sequence is that of NADPH-dependent diflavin oxidoreductase 1 from Homo sapiens (Human).